Here is a 416-residue protein sequence, read N- to C-terminus: MNKQSWLLNLSLLKTHPAFRAVFLARFISIVSLGLLGVAVPVQIQMMTHSTWQVGLSVTLTGGAMFVGLMVGGVLADRYERKKVILLARGTCGIGFIGLCLNALLPEPSLLAIYLLGLWDGFFASLGVTALLAATPALVGRENLMQAGAITMLTVRLGSVISPMIGGLLLATGGVAWNYGLAAAGTFITLLPLLSLPALPPPPQPREHPLKSLLAGFRFLLASPLVGGIALLGGLLTMASAVRVLYPALADNWQMSAAQIGFLYAAIPLGAAIGALTSGKLAHSARPGLLMLLSTLGSFLAIGLFGLMPMWILGVVCLALFGWLSAVSSLLQYTMLQTQTPEAMLGRINGLWTAQNVTGDAIGAALLGGLGAMMTPVASASASGFGLLIIGVLLLLVLVELRRFRQTPPQVTASDG.

Residues 1 to 21 (MNKQSWLLNLSLLKTHPAFRA) are Cytoplasmic-facing. The chain crosses the membrane as a helical span at residues 22-42 (VFLARFISIVSLGLLGVAVPV). The Periplasmic segment spans residues 43-55 (QIQMMTHSTWQVG). A helical membrane pass occupies residues 56–76 (LSVTLTGGAMFVGLMVGGVLA). At 77 to 83 (DRYERKK) the chain is on the cytoplasmic side. A helical membrane pass occupies residues 84–104 (VILLARGTCGIGFIGLCLNAL). Residues 105–109 (LPEPS) lie on the Periplasmic side of the membrane. The chain crosses the membrane as a helical span at residues 110–130 (LLAIYLLGLWDGFFASLGVTA). Topologically, residues 131–156 (LLAATPALVGRENLMQAGAITMLTVR) are cytoplasmic. A helical transmembrane segment spans residues 157–177 (LGSVISPMIGGLLLATGGVAW). Residue Asn-178 is a topological domain, periplasmic. The helical transmembrane segment at 179 to 199 (YGLAAAGTFITLLPLLSLPAL) threads the bilayer. The Cytoplasmic portion of the chain corresponds to 200–218 (PPPPQPREHPLKSLLAGFR). Residues 219–239 (FLLASPLVGGIALLGGLLTMA) traverse the membrane as a helical segment. The Periplasmic segment spans residues 240–256 (SAVRVLYPALADNWQMS). Residues 257–277 (AAQIGFLYAAIPLGAAIGALT) traverse the membrane as a helical segment. Residues 278-287 (SGKLAHSARP) lie on the Cytoplasmic side of the membrane. Residues 288-307 (GLLMLLSTLGSFLAIGLFGL) traverse the membrane as a helical segment. Over 308-313 (MPMWIL) the chain is Periplasmic. A helical membrane pass occupies residues 314–336 (GVVCLALFGWLSAVSSLLQYTML). Residues 337–356 (QTQTPEAMLGRINGLWTAQN) lie on the Cytoplasmic side of the membrane. The chain crosses the membrane as a helical span at residues 357–377 (VTGDAIGAALLGGLGAMMTPV). Residue Ala-378 is a topological domain, periplasmic. The helical transmembrane segment at 379–399 (SASASGFGLLIIGVLLLLVLV) threads the bilayer. Over 400–416 (ELRRFRQTPPQVTASDG) the chain is Cytoplasmic.

This sequence belongs to the major facilitator superfamily. EntS (TC 2.A.1.38) family.

It is found in the cell inner membrane. Component of an export pathway for enterobactin. This chain is Enterobactin exporter EntS, found in Escherichia coli O157:H7.